Consider the following 86-residue polypeptide: MAVRLWVVALALAALFIVDREVPVSAEKQVFSRMPICEHMTESPDCSRIYDPVCGTDGVTYESECKLCLARIENKQDIQIVKDGEC.

The first 26 residues, 1–26, serve as a signal peptide directing secretion; sequence MAVRLWVVALALAALFIVDREVPVSA. The 56-residue stretch at 31 to 86 folds into the Kazal-like domain; sequence FSRMPICEHMTESPDCSRIYDPVCGTDGVTYESECKLCLARIENKQDIQIVKDGEC. 3 cysteine pairs are disulfide-bonded: Cys37–Cys68, Cys46–Cys65, and Cys54–Cys86.

Synthesized in duodenal goblet cells and in monocytes in bone marrow and blood.

The protein localises to the secreted. Its function is as follows. Inhibits the glucose-induced insulin secretion from perfused pancreas; also plays a role in the immune system. Does not inhibit trypsin. The sequence is that of Serine protease inhibitor Kazal-type 4 (SPINK4) from Sus scrofa (Pig).